The following is a 188-amino-acid chain: dCTP deaminase (188 aa).

109–114 lines the dCTP pocket; the sequence is KSTYAR. Glu-135 (proton donor/acceptor) is an active-site residue. DCTP-binding residues include Gln-154, Tyr-168, and Gln-178.

It belongs to the dCTP deaminase family. Homotrimer.

It catalyses the reaction dCTP + H2O + H(+) = dUTP + NH4(+). Its pathway is pyrimidine metabolism; dUMP biosynthesis; dUMP from dCTP (dUTP route): step 1/2. Catalyzes the deamination of dCTP to dUTP. This chain is dCTP deaminase, found in Helicobacter pylori (strain Shi470).